Here is a 112-residue protein sequence, read N- to C-terminus: Large ribosomal subunit protein bL21 (112 aa).

It belongs to the bacterial ribosomal protein bL21 family. As to quaternary structure, part of the 50S ribosomal subunit. Contacts protein L20.

Its function is as follows. This protein binds to 23S rRNA in the presence of protein L20. The sequence is that of Large ribosomal subunit protein bL21 from Buchnera aphidicola subsp. Baizongia pistaciae (strain Bp).